The chain runs to 139 residues: Large ribosomal subunit protein uL16 (139 aa).

It belongs to the universal ribosomal protein uL16 family. As to quaternary structure, part of the 50S ribosomal subunit.

Its function is as follows. Binds 23S rRNA and is also seen to make contacts with the A and possibly P site tRNAs. This Rippkaea orientalis (strain PCC 8801 / RF-1) (Cyanothece sp. (strain PCC 8801)) protein is Large ribosomal subunit protein uL16.